Here is a 209-residue protein sequence, read N- to C-terminus: Potassium-transporting ATPase KdpC subunit (209 aa).

The chain crosses the membrane as a helical span at residues 11-31 (MILALTVLTGLAYPLAVTAVA). Positions 188–209 (AQAPTPRQPEPGHPEPGRPEVR) are disordered. A compositionally biased stretch (basic and acidic residues) spans 197 to 209 (EPGHPEPGRPEVR).

It belongs to the KdpC family. As to quaternary structure, the system is composed of three essential subunits: KdpA, KdpB and KdpC.

Its subcellular location is the cell inner membrane. Functionally, part of the high-affinity ATP-driven potassium transport (or Kdp) system, which catalyzes the hydrolysis of ATP coupled with the electrogenic transport of potassium into the cytoplasm. This subunit acts as a catalytic chaperone that increases the ATP-binding affinity of the ATP-hydrolyzing subunit KdpB by the formation of a transient KdpB/KdpC/ATP ternary complex. The chain is Potassium-transporting ATPase KdpC subunit from Rhodospirillum centenum (strain ATCC 51521 / SW).